The chain runs to 670 residues: Kinesin-like protein KIF2B (670 aa).

Threonine 122 bears the Phosphothreonine; by PLK1 mark. Residues 146–173 are a coiled coil; that stretch reads CLQEIEKVQKQREKRRRLQQEIRARRAL. Serine 201 is modified (phosphoserine; by PLK1). The Kinesin motor domain maps to 210–540; that stretch reads RICVCVRKRP…LRYANRVKEL (331 aa). 300-307 contributes to the ATP binding site; sequence GQTGSGKT.

It belongs to the TRAFAC class myosin-kinesin ATPase superfamily. Kinesin family. MCAK/KIF2 subfamily. In terms of processing, phosphorylation at Thr-122 by PLK1 is required for activity in the correction of kinetochore-microtubules attachment errors, while phosphorylation at Ser-201 also by PLK1 is required for the kinetochore localization and activity in prometaphase.

It is found in the cytoplasm. It localises to the cytoskeleton. Its subcellular location is the microtubule organizing center. The protein resides in the centrosome. The protein localises to the spindle. It is found in the chromosome. It localises to the centromere. Its subcellular location is the kinetochore. Plus end-directed microtubule-dependent motor required for spindle assembly and chromosome movement during mitosis. Has microtubule depolymerization activity. Plays a role in chromosome congression. The sequence is that of Kinesin-like protein KIF2B (KIF2B) from Macaca fascicularis (Crab-eating macaque).